Consider the following 292-residue polypeptide: Cholesterol ring-cleaving hydrolase IpdA subunit (292 aa).

This sequence belongs to the 3-oxoacid CoA-transferase subunit A family. In terms of assembly, heterotetramer composed of 2 IpdA subunits and 2 IpdB subunits.

It carries out the reaction (3E)-2-(2-carboxylatoethyl)-3-methyl-6-oxocyclohex-1-ene-1-carboxyl-CoA + H2O = 6-methyl-3,7-dioxodecanedioyl-CoA. The protein operates within steroid metabolism; cholesterol degradation. Involved in the final steps of cholesterol and steroid degradation. Opens the last steroid ring of cholesterol by catalyzing the hydrolysis of (3E)-2-(2-carboxylatoethyl)-3-methyl-6-oxocyclohex-1-ene-1-carboxyl-CoA (COCHEA-CoA) to 6-methyl-3,7-dioxodecanedioyl-CoA (MeDODA-CoA). This Mycobacterium tuberculosis (strain CDC 1551 / Oshkosh) protein is Cholesterol ring-cleaving hydrolase IpdA subunit.